The following is a 177-amino-acid chain: Arginine metabolism regulation protein I (177 aa).

Polar residues predominate over residues 1 to 12 (MTSNSDGSSTSP). 2 disordered regions span residues 1 to 82 (MTSN…TRRK) and 157 to 177 (NASD…SPAN). Over residues 40–53 (QDQEGDFDEEDDDD) the composition is skewed to acidic residues. The segment covering 56 to 67 (SVSTSTPTPTIT) has biased composition (low complexity). The MADS-box domain occupies 80 to 134 (RRKQPIRYIENKTRRHVTFSKRRHGIMKKAYELSVLTGANILLLILANSGLVYTF). The span at 158 to 177 (ASDTPDATDTSPAQEQSPAN) shows a compositional bias: polar residues.

As to quaternary structure, interacts with ARG81 and ARG82.

It localises to the nucleus. Its function is as follows. With ARG81, ARG82 and MCM1, coordinates the expression of arginine anabolic and catabolic genes in response to arginine. This Saccharomyces cerevisiae (strain ATCC 204508 / S288c) (Baker's yeast) protein is Arginine metabolism regulation protein I (ARG80).